Reading from the N-terminus, the 667-residue chain is Fatty acyl-CoA synthetase A (667 aa).

Belongs to the ATP-dependent AMP-binding enzyme family.

Its subcellular location is the endosome membrane. It carries out the reaction a long-chain fatty acid + ATP + CoA = a long-chain fatty acyl-CoA + AMP + diphosphate. Long chain fatty acid acyl-CoA synthetases catalyze the formation of a thiester bond between a free fatty acid and coenzyme A during fatty acid metabolic process. May mediate fatty acid retrieval from the lumen of endosomes into the cytoplasm. The chain is Fatty acyl-CoA synthetase A (fcsA) from Dictyostelium discoideum (Social amoeba).